A 283-amino-acid chain; its full sequence is Pantothenate synthetase (283 aa).

30-37 (MGYLHEGH) is an ATP binding site. The active-site Proton donor is His-37. Gln-61 lines the (R)-pantoate pocket. Gln-61 provides a ligand contact to beta-alanine. Residue 147 to 150 (GRKD) coordinates ATP. Gln-153 lines the (R)-pantoate pocket. Residues Val-176 and 184 to 187 (MSSR) contribute to the ATP site.

The protein belongs to the pantothenate synthetase family. Homodimer.

The protein localises to the cytoplasm. The enzyme catalyses (R)-pantoate + beta-alanine + ATP = (R)-pantothenate + AMP + diphosphate + H(+). It functions in the pathway cofactor biosynthesis; (R)-pantothenate biosynthesis; (R)-pantothenate from (R)-pantoate and beta-alanine: step 1/1. Its function is as follows. Catalyzes the condensation of pantoate with beta-alanine in an ATP-dependent reaction via a pantoyl-adenylate intermediate. This chain is Pantothenate synthetase, found in Syntrophotalea carbinolica (strain DSM 2380 / NBRC 103641 / GraBd1) (Pelobacter carbinolicus).